The sequence spans 21 residues: Cupiennin-6b (21 aa).

Residue serine 21 is modified to Serine amide.

As to expression, expressed by the venom gland.

The protein resides in the secreted. The sequence is that of Cupiennin-6b from Cupiennius salei (American wandering spider).